Consider the following 393-residue polypeptide: S-adenosylmethionine synthase 2 (393 aa).

Position 9 (Glu-9) interacts with Mg(2+). Position 15 (His-15) interacts with ATP. Position 43 (Glu-43) interacts with K(+). L-methionine is bound by residues Glu-56 and Gln-99. ATP contacts are provided by residues 167-169 (DGK), 235-238 (SGRF), Asp-246, 252-253 (RK), Ala-269, Lys-273, and Lys-277. L-methionine is bound at residue Asp-246. Lys-277 is an L-methionine binding site.

This sequence belongs to the AdoMet synthase family. In terms of assembly, homotetramer. The cofactor is Mn(2+). It depends on Mg(2+) as a cofactor. Co(2+) serves as cofactor. Requires K(+) as cofactor.

The protein localises to the cytoplasm. It carries out the reaction L-methionine + ATP + H2O = S-adenosyl-L-methionine + phosphate + diphosphate. It functions in the pathway amino-acid biosynthesis; S-adenosyl-L-methionine biosynthesis; S-adenosyl-L-methionine from L-methionine: step 1/1. Its function is as follows. Catalyzes the formation of S-adenosylmethionine from methionine and ATP. The reaction comprises two steps that are both catalyzed by the same enzyme: formation of S-adenosylmethionine (AdoMet) and triphosphate, and subsequent hydrolysis of the triphosphate. In Populus trichocarpa (Western balsam poplar), this protein is S-adenosylmethionine synthase 2 (METK2).